Consider the following 260-residue polypeptide: NH(3)-dependent NAD(+) synthetase (260 aa).

31–38 (GLSGGLDS) provides a ligand contact to ATP. Aspartate 37 is a binding site for Mg(2+). Residue arginine 112 participates in deamido-NAD(+) binding. Threonine 132 is an ATP binding site. Residue glutamate 137 participates in Mg(2+) binding. 2 residues coordinate ATP: lysine 161 and serine 183.

This sequence belongs to the NAD synthetase family. In terms of assembly, homodimer.

The enzyme catalyses deamido-NAD(+) + NH4(+) + ATP = AMP + diphosphate + NAD(+) + H(+). It participates in cofactor biosynthesis; NAD(+) biosynthesis; NAD(+) from deamido-NAD(+) (ammonia route): step 1/1. Functionally, catalyzes the ATP-dependent amidation of deamido-NAD to form NAD. Uses ammonia as a nitrogen source. The polypeptide is NH(3)-dependent NAD(+) synthetase (Helicobacter pylori (strain G27)).